Consider the following 398-residue polypeptide: S-adenosylmethionine decarboxylase proenzyme (398 aa).

Active-site residues include Glu-18 and Glu-21. The Schiff-base intermediate with substrate; via pyruvic acid role is filled by Ser-78. Ser-78 carries the post-translational modification Pyruvic acid (Ser); by autocatalysis. The Proton donor; for catalytic activity role is filled by Cys-92. Residues Ser-243 and His-256 each act as proton acceptor; for processing activity in the active site.

Belongs to the eukaryotic AdoMetDC family. Pyruvate is required as a cofactor. Post-translationally, is synthesized initially as an inactive proenzyme. Formation of the active enzyme involves a self-maturation process in which the active site pyruvoyl group is generated from an internal serine residue via an autocatalytic post-translational modification. Two non-identical subunits are generated from the proenzyme in this reaction, and the pyruvate is formed at the N-terminus of the alpha chain, which is derived from the carboxyl end of the proenzyme. The post-translation cleavage follows an unusual pathway, termed non-hydrolytic serinolysis, in which the side chain hydroxyl group of the serine supplies its oxygen atom to form the C-terminus of the beta chain, while the remainder of the serine residue undergoes an oxidative deamination to produce ammonia and the pyruvoyl group blocking the N-terminus of the alpha chain.

It catalyses the reaction S-adenosyl-L-methionine + H(+) = S-adenosyl 3-(methylsulfanyl)propylamine + CO2. It participates in amine and polyamine biosynthesis; S-adenosylmethioninamine biosynthesis; S-adenosylmethioninamine from S-adenosyl-L-methionine: step 1/1. The polypeptide is S-adenosylmethionine decarboxylase proenzyme (SAMDC) (Oryza sativa subsp. japonica (Rice)).